A 333-amino-acid chain; its full sequence is HTH-type transcriptional repressor PurR (333 aa).

An HTH lacI-type domain is found at 2 to 56; it reads ATIKDVAKMAGVSTTTVSHVINKTRFVAKETEQQVLQAIKNLNYSPSAVARSLKV. A DNA-binding region (H-T-H motif) is located at residues 4–23; the sequence is IKDVAKMAGVSTTTVSHVIN. The DNA-binding element occupies 48-56; sequence SAVARSLKV. Hypoxanthine is bound by residues Tyr-73, Lys-189, Thr-191, Phe-220, and Asp-274.

As to quaternary structure, homodimer.

Its pathway is purine metabolism; purine nucleotide biosynthesis [regulation]. Functionally, is the main repressor of the genes involved in the de novo synthesis of purine nucleotides, regulating purB, purC, purEK, purF, purHD, purL, purMN and guaBA expression. PurR is allosterically activated to bind its cognate DNA by binding the purine corepressors, hypoxanthine or guanine, thereby effecting transcription repression. This chain is HTH-type transcriptional repressor PurR, found in Histophilus somni (strain 2336) (Haemophilus somnus).